The primary structure comprises 172 residues: Shikimate kinase (172 aa).

11-16 is an ATP binding site; the sequence is GAGKST. Residue S15 coordinates Mg(2+). Positions 33, 57, and 79 each coordinate substrate. ATP is bound at residue R117. Residue R136 coordinates substrate. R153 lines the ATP pocket.

Belongs to the shikimate kinase family. In terms of assembly, monomer. Mg(2+) is required as a cofactor.

It localises to the cytoplasm. It carries out the reaction shikimate + ATP = 3-phosphoshikimate + ADP + H(+). It functions in the pathway metabolic intermediate biosynthesis; chorismate biosynthesis; chorismate from D-erythrose 4-phosphate and phosphoenolpyruvate: step 5/7. Catalyzes the specific phosphorylation of the 3-hydroxyl group of shikimic acid using ATP as a cosubstrate. This Pseudomonas fluorescens (strain Pf0-1) protein is Shikimate kinase.